Here is a 415-residue protein sequence, read N- to C-terminus: Teichoic acid D-alanyltransferase (415 aa).

The Extracellular portion of the chain corresponds to 1 to 16 (MIDFLKQLPHLEPYGN). Residues 17–36 (PFYFIYLGIALLPIFIGLFF) traverse the membrane as a helical segment. Topologically, residues 37-40 (KKRF) are cytoplasmic. The chain crosses the membrane as a helical span at residues 41–56 (AIYECLVSITFIVLAL). Over 57–60 (TGTH) the chain is Extracellular. The helical transmembrane segment at 61-87 (ASQILALLFYIVWQIIWVYSYKRYRSQ) threads the bilayer. Residues 88-90 (RDN) are Cytoplasmic-facing. A helical membrane pass occupies residues 91–115 (KWVFYLHSFLVVLPLILVKVEPTIN). Residues 116-125 (GTQSLLNFLG) are Extracellular-facing. Residues 126–142 (ISYLTFRAVGMIIEMRD) traverse the membrane as a helical segment. Residues 143–149 (GVLKEFT) are Cytoplasmic-facing. An intramembrane segment occupies 150–179 (LGEFLRFMLFMPTFTSGPIDRFKRFNEDYQ). Residues 180-183 (SIPN) are Cytoplasmic-facing. Residues 184 to 227 (RDELLNMLEQAVKYIMLGFLYKFVLAQIFGSMLLPPLKAQALSQ) traverse the membrane as a helical segment. At 228 to 232 (GGIFN) the chain is on the extracellular side. Residues 233-264 (LPTLGVMYVYGFDLFFDFAGYSMFALAVSNLM) form a helical membrane-spanning segment. The Cytoplasmic portion of the chain corresponds to 265–274 (GIKSPINFDK). An intramembrane segment occupies 275–311 (PFISRDMKEFWNRWHMSLSFWFRDFVFMRLVIVLMRN). Topologically, residues 312-316 (KVFKN) are cytoplasmic. The chain crosses the membrane as a helical span at residues 317–336 (RNTTSNVAYIINMMVMGFWH). Histidine 336 is a catalytic residue. Residues 337–339 (GIT) lie on the Extracellular side of the membrane. A helical membrane pass occupies residues 340–373 (WYYIAYGIFHGIGLVINDAWLRKKKTINKDRKKA). At 374–381 (GLKPLPEN) the chain is on the cytoplasmic side. Residues 382–404 (KWTKALGIFITFNTVMLSFLIFS) form a helical membrane-spanning segment. Over 405-415 (GFLNDLWFTKK) the chain is Extracellular.

It belongs to the membrane-bound acyltransferase family.

It localises to the cell membrane. It functions in the pathway cell wall biogenesis; lipoteichoic acid biosynthesis. O-acyltransferase that catalyzes D-alanylation of both teichoic acid and lipoteichoic acid (LTA). D-alanylation of LTA plays an important role in modulating the properties of the cell wall in Gram-positive bacteria, influencing the net charge of the cell wall. Catalyzes D-alanylation from DltC carrier protein. This is Teichoic acid D-alanyltransferase from Streptococcus thermophilus (strain ATCC BAA-250 / LMG 18311).